Reading from the N-terminus, the 142-residue chain is MAKKVQAYVKLQVAAGMANPSPPVGPALGQQGVNIMEFCKAFNARTESLEKGLPIPVVITVYADRSFTFVTKTPPAAVLLKKAAGIKSGSSKPNKDKVGKVTLDQIRQIAETKAADMTGATIETKMKSIEGTARSMGLVVEG.

This sequence belongs to the universal ribosomal protein uL11 family. In terms of assembly, part of the ribosomal stalk of the 50S ribosomal subunit. Interacts with L10 and the large rRNA to form the base of the stalk. L10 forms an elongated spine to which L12 dimers bind in a sequential fashion forming a multimeric L10(L12)X complex. Post-translationally, one or more lysine residues are methylated.

Functionally, forms part of the ribosomal stalk which helps the ribosome interact with GTP-bound translation factors. This Histophilus somni (strain 129Pt) (Haemophilus somnus) protein is Large ribosomal subunit protein uL11.